A 317-amino-acid polypeptide reads, in one-letter code: Ribosomal RNA small subunit methyltransferase H (317 aa).

Residues 39–41 (GGH), aspartate 59, phenylalanine 83, aspartate 104, and glutamine 111 each bind S-adenosyl-L-methionine.

The protein belongs to the methyltransferase superfamily. RsmH family.

It localises to the cytoplasm. It catalyses the reaction cytidine(1402) in 16S rRNA + S-adenosyl-L-methionine = N(4)-methylcytidine(1402) in 16S rRNA + S-adenosyl-L-homocysteine + H(+). Functionally, specifically methylates the N4 position of cytidine in position 1402 (C1402) of 16S rRNA. This is Ribosomal RNA small subunit methyltransferase H from Paraburkholderia phytofirmans (strain DSM 17436 / LMG 22146 / PsJN) (Burkholderia phytofirmans).